The sequence spans 305 residues: Sulfate adenylyltransferase subunit 2 (305 aa).

This sequence belongs to the PAPS reductase family. CysD subfamily. As to quaternary structure, heterodimer composed of CysD, the smaller subunit, and CysN.

It catalyses the reaction sulfate + ATP + H(+) = adenosine 5'-phosphosulfate + diphosphate. Its pathway is sulfur metabolism; hydrogen sulfide biosynthesis; sulfite from sulfate: step 1/3. Functionally, with CysN forms the ATP sulfurylase (ATPS) that catalyzes the adenylation of sulfate producing adenosine 5'-phosphosulfate (APS) and diphosphate, the first enzymatic step in sulfur assimilation pathway. APS synthesis involves the formation of a high-energy phosphoric-sulfuric acid anhydride bond driven by GTP hydrolysis by CysN coupled to ATP hydrolysis by CysD. This Pseudomonas fluorescens (strain Pf0-1) protein is Sulfate adenylyltransferase subunit 2.